The sequence spans 257 residues: Metallo-beta-lactamase type 2 (257 aa).

The first 30 residues, 1-30 (MKKNTLLKVGLCVSLLGTTQFVSTISSVQA), serve as a signal peptide directing secretion. Zn(2+) is bound by residues H116, H118, D120, H179, and C198. Substrate is bound by residues K201 and N210. H240 provides a ligand contact to Zn(2+).

The protein belongs to the metallo-beta-lactamase superfamily. Class-B beta-lactamase family. In terms of assembly, monomer. It depends on Zn(2+) as a cofactor.

Its subcellular location is the periplasm. It catalyses the reaction a beta-lactam + H2O = a substituted beta-amino acid. Functionally, confers resistance to the different beta-lactams antibiotics (penicillin, cephalosporin and carbapenem) via the hydrolysis of the beta-lactam ring. The polypeptide is Metallo-beta-lactamase type 2 (Bacillus sp. (strain 170)).